Consider the following 658-residue polypeptide: Probable Xaa-Pro aminopeptidase P (658 aa).

The Mn(2+) site is built by Asp449, Asp460, Glu558, and Glu572.

Belongs to the peptidase M24B family. The cofactor is Mn(2+).

It catalyses the reaction Release of any N-terminal amino acid, including proline, that is linked to proline, even from a dipeptide or tripeptide.. In terms of biological role, catalyzes the removal of a penultimate prolyl residue from the N-termini of peptides. The protein is Probable Xaa-Pro aminopeptidase P (ampp) of Aspergillus clavatus (strain ATCC 1007 / CBS 513.65 / DSM 816 / NCTC 3887 / NRRL 1 / QM 1276 / 107).